A 346-amino-acid polypeptide reads, in one-letter code: MALLKVKFDQKKRVKLAQGLWLMNWLSVLAGIVIFSLGLFLKIELRKRSDVMNNSESHFVPNSLIGMGVLSCVFNSLAGKICYDALDPSKYAKWKPWLKSYLVVCVLFNIVLFLVALCCFLMRGSLESTLAQGLKNGMKYYRDTDTPGRCFMKKTIDLLQIEFKCCGNNGFRDWFEIQWISNRYLDFSSKEVKDRIKSNVDGRYLVDGVPFSCCNPNSPRPCIQYQLTNNSAHYSYDHQTEELNLWVRGCRAALLSYYGSLMNSMGAVTLLVWLFEVSITIGLRYLHTALEGVSNPEDLECESEGWLLEKSVSETWKAFLESLKKLGKSNQVEAEGADAGQAPEAG.

At 1 to 24 the chain is on the cytoplasmic side; it reads MALLKVKFDQKKRVKLAQGLWLMN. A helical membrane pass occupies residues 25 to 43; sequence WLSVLAGIVIFSLGLFLKI. Residues 44–61 lie on the Lumenal side of the membrane; that stretch reads ELRKRSDVMNNSESHFVP. Asn53 is a glycosylation site (N-linked (GlcNAc...) asparagine). A helical membrane pass occupies residues 62 to 80; it reads NSLIGMGVLSCVFNSLAGK. The Cytoplasmic portion of the chain corresponds to 81-99; that stretch reads ICYDALDPSKYAKWKPWLK. The helical transmembrane segment at 100–123 threads the bilayer; it reads SYLVVCVLFNIVLFLVALCCFLMR. Topologically, residues 124-264 are lumenal; it reads GSLESTLAQG…LSYYGSLMNS (141 aa). The N-linked (GlcNAc...) asparagine glycan is linked to Asn229. The chain crosses the membrane as a helical span at residues 265–290; that stretch reads MGAVTLLVWLFEVSITIGLRYLHTAL. Topologically, residues 291–346 are cytoplasmic; sequence EGVSNPEDLECESEGWLLEKSVSETWKAFLESLKKLGKSNQVEAEGADAGQAPEAG. The interval 341 to 346 is interaction with MREG; it reads QAPEAG.

Belongs to the PRPH2/ROM1 family. As to quaternary structure, homodimer; disulfide-linked. Forms a homotetramer. Forms a heterotetramer with ROM1. Homotetramer and heterotetramer core complexes go on to form higher order complexes by formation of intermolecular disulfide bonds. Interacts with MREG. Interacts with STX3. Interacts with SNAP25. As to expression, retina (photoreceptor). In rim region of ROS (rod outer segment) disks.

It is found in the membrane. It localises to the cell projection. The protein localises to the cilium. Its subcellular location is the photoreceptor outer segment. The protein resides in the photoreceptor inner segment. Its function is as follows. Essential for retina photoreceptor outer segment disk morphogenesis, may also play a role with ROM1 in the maintenance of outer segment disk structure. Required for the maintenance of retinal outer nuclear layer thickness. Required for the correct development and organization of the photoreceptor inner segment. The chain is Peripherin-2 (PRPH2) from Felis catus (Cat).